Reading from the N-terminus, the 154-residue chain is Protein X (154 aa).

The tract at residues 68–117 is mitochondrial targeting sequence; that stretch reads PCALRFTSARCMETTVNAHQILPKVLHKRTLGLPAMSTTDLEAYFKDSVF.

It belongs to the orthohepadnavirus protein X family. In terms of assembly, may form homodimer. May interact with host CEBPA, CFLAR, CREB1, DDB1, E4F1, HBXIP, HSPD1/HSP60, NFKBIA, POLR2E and SMAD4. Interacts with host SMC5-SMC6 complex and induces its degradation. Interacts with host TRPC4AP; leading to prevent ubiquitination of TRPC4AP. Interacts with host PLSCR1; this interaction promotes ubiquitination and degradation of HBx and impairs HBx-mediated cell proliferation. A fraction may be phosphorylated in insect cells and HepG2 cells, a human hepatoblastoma cell line. Phosphorylated in vitro by host protein kinase C or mitogen-activated protein kinase. N-acetylated in insect cells.

Its subcellular location is the host cytoplasm. It is found in the host nucleus. The protein localises to the host mitochondrion. Functionally, multifunctional protein that plays a role in silencing host antiviral defenses and promoting viral transcription. Does not seem to be essential for HBV infection. May be directly involved in development of cirrhosis and liver cancer (hepatocellular carcinoma). Most of cytosolic activities involve modulation of cytosolic calcium. The effect on apoptosis is controversial depending on the cell types in which the studies have been conducted. May induce apoptosis by localizing in mitochondria and causing loss of mitochondrial membrane potential. May also modulate apoptosis by binding host CFLAR, a key regulator of the death-inducing signaling complex (DISC). Promotes viral transcription by using the host E3 ubiquitin ligase DDB1 to target the SMC5-SMC6 complex to proteasomal degradation. This host complex would otherwise bind to viral episomal DNA, and prevents its transcription. Moderately stimulates transcription of many different viral and cellular transcription elements. Promoters and enhancers stimulated by HBx contain DNA binding sites for NF-kappa-B, AP-1, AP-2, c-EBP, ATF/CREB, or the calcium-activated factor NF-AT. In Homo sapiens (Human), this protein is Protein X.